The chain runs to 325 residues: UPF0324 membrane protein Bd1437 (325 aa).

8 helical membrane passes run 21–43 (IAAL…GIVL), 58–80 (YTHH…MVVG), 87–105 (IGYT…MLIG), 115–137 (STLI…APTI), 144–166 (VSVA…PWIG), 211–230 (ARAL…YFRG), 243–260 (PWFI…TWIP), and 302–324 (LQGV…IGWI).

Belongs to the UPF0324 family.

The protein resides in the cell membrane. This chain is UPF0324 membrane protein Bd1437, found in Bdellovibrio bacteriovorus (strain ATCC 15356 / DSM 50701 / NCIMB 9529 / HD100).